The primary structure comprises 317 residues: Melanocyte-stimulating hormone receptor (317 aa).

The Extracellular segment spans residues 1-37; that stretch reads MPIHGAPRKLLGSLNSTPTATPKLGLAANHTGAPCLE. Residue Asn29 is glycosylated (N-linked (GlcNAc...) asparagine). Residues 38 to 63 form a helical membrane-spanning segment; it reads VSIPDGLFLSLGLVSLVENVLVVAAI. At 64-72 the chain is on the cytoplasmic side; sequence AKNRNLHSP. Residues 73-93 traverse the membrane as a helical segment; that stretch reads MYCFICCLALSDLLVSGSNML. Topologically, residues 94-118 are extracellular; that stretch reads EMAVVLLLEGGALATRASVVQQLHN. Residues 119-140 traverse the membrane as a helical segment; sequence TIDVLTCSSMLCSLCFLGAIAV. The Cytoplasmic portion of the chain corresponds to 141–163; it reads DRHISIFYALRYHSIMTLPRAQR. Residues 164–183 form a helical membrane-spanning segment; sequence VIAAIWVASILSSTLFITYY. Residues 184 to 191 are Extracellular-facing; sequence DHAAVLLC. A helical transmembrane segment spans residues 192–211; the sequence is LVVFFLAMLVLMAVLYVHML. Residues 212 to 240 are Cytoplasmic-facing; that stretch reads ARACQHAQGITRLHKRQPPAHQGFGLRGA. The helical transmembrane segment at 241-266 threads the bilayer; the sequence is ATLTILLGIFFLCWGPFFLHLKLVVF. Residues 267–279 lie on the Extracellular side of the membrane; sequence CPQHLTCSCIFKN. The helical transmembrane segment at 280–300 threads the bilayer; that stretch reads FKVFLTLIICNTIIDPLIYAF. Over 301-317 the chain is Cytoplasmic; that stretch reads RSQELRRTLKEVLLCSW. Cys315 carries S-palmitoyl cysteine lipidation.

The protein belongs to the G-protein coupled receptor 1 family. Interacts with MGRN1, but does not undergo MGRN1-mediated ubiquitination; this interaction competes with GNAS-binding and thus inhibits agonist-induced cAMP production. Interacts with OPN3; the interaction results in a decrease in MC1R-mediated cAMP signaling and ultimately a decrease in melanin production in melanocytes.

It localises to the cell membrane. Its function is as follows. Receptor for MSH (alpha, beta and gamma) and ACTH. The activity of this receptor is mediated by G proteins which activate adenylate cyclase. Mediates melanogenesis, the production of eumelanin (black/brown) and phaeomelanin (red/yellow), via regulation of cAMP signaling in melanocytes. In Saimiri oerstedii (Central American squirrel monkey), this protein is Melanocyte-stimulating hormone receptor (MC1R).